Reading from the N-terminus, the 219-residue chain is UPF0502 protein Swoo_2055 (219 aa).

The interval 167 to 195 (QVKGESVPISEHSRSQREAPSKRQDEMDE) is disordered. A compositionally biased stretch (basic and acidic residues) spans 177–191 (EHSRSQREAPSKRQD).

It belongs to the UPF0502 family.

This chain is UPF0502 protein Swoo_2055, found in Shewanella woodyi (strain ATCC 51908 / MS32).